A 283-amino-acid chain; its full sequence is Nicotine 6-hydroxylase medium subunit (283 aa).

One can recognise an FAD-binding PCMH-type domain in the interval 1-176; it reads MKLPAIRYAS…TDVWIPSRPN (176 aa). Residues 31–35 and 110–114 each bind FAD; these read AGGQS and TLGGS.

Heterotrimer composed of a large subunit (NdhL), a medium subunit (NdhM) and a small subunit (NdhS). FAD serves as cofactor.

It localises to the cytoplasm. The catalysed reaction is (R)-nicotine + A + H2O = (R)-6-hydroxynicotine + AH2. It carries out the reaction (S)-nicotine + A + H2O = (S)-6-hydroxynicotine + AH2. It participates in alkaloid degradation; nicotine degradation; 6-hydroxypseudooxynicotine from nicotine (R-isomer route): step 1/2. The protein operates within alkaloid degradation; nicotine degradation; 6-hydroxypseudooxynicotine from nicotine (S-isomer route): step 1/2. With respect to regulation, nicotine dehydrogenase activity is inhibited by tungsten. Component of the nicotine 6-hydroxylase, which is involved in the degradation of nicotine. Catalyzes the hydroxylation of the pyridine ring at C6 to form 6-hydroxynicotine. Can use both L-nicotine and D-nicotine. The sequence is that of Nicotine 6-hydroxylase medium subunit from Paenarthrobacter nicotinovorans (Arthrobacter nicotinovorans).